Reading from the N-terminus, the 784-residue chain is Lon protease (784 aa).

In terms of domain architecture, Lon N-terminal spans 6 to 207 (LPLMALRDMV…TVITTLTSNI (202 aa)). ATP is bound at residue 356 to 363 (GPPGVGKT). Residues 592 to 773 (EDQIGSTTGL…DQVLKHALVE (182 aa)) form the Lon proteolytic domain. Residues Ser-679 and Lys-722 contribute to the active site.

Belongs to the peptidase S16 family. Homohexamer. Organized in a ring with a central cavity.

It localises to the cytoplasm. The catalysed reaction is Hydrolysis of proteins in presence of ATP.. Functionally, ATP-dependent serine protease that mediates the selective degradation of mutant and abnormal proteins as well as certain short-lived regulatory proteins. Required for cellular homeostasis and for survival from DNA damage and developmental changes induced by stress. Degrades polypeptides processively to yield small peptide fragments that are 5 to 10 amino acids long. Binds to DNA in a double-stranded, site-specific manner. The protein is Lon protease of Rickettsia prowazekii (strain Madrid E).